The chain runs to 219 residues: Putative protease Do-like 6, chloroplastic (219 aa).

Residues Met-1–Cys-45 constitute a chloroplast transit peptide. The tract at residues Lys-61–Tyr-216 is serine protease. Catalysis depends on charge relay system residues His-99, Asp-130, and Ser-208.

Belongs to the peptidase S1B family.

It localises to the plastid. The protein localises to the chloroplast. Functionally, putative serine protease. The sequence is that of Putative protease Do-like 6, chloroplastic (DEGP6) from Arabidopsis thaliana (Mouse-ear cress).